The chain runs to 469 residues: Lactonohydrolase oryH (469 aa).

A signal peptide spans 1-20; sequence MYLSLRLVSLALCIAPLASA.

This sequence belongs to the SMP-30/CGR1 family.

Its pathway is secondary metabolite biosynthesis. Its function is as follows. Lactonohydrolase; part of the gene cluster that mediates the biosynthesis of oryzines, natural products with an unusual maleidride backbone. The two subunits of the fungal fatty acid synthase oryfasA and oryfasB probably form octenoic acid. This fatty acid is most likely activated by the acyl-CoA ligase oryP to give octenyl-CoA before the citrate synthase-like protein oryE catalyzes condensation with oxaloacetate to form tricarboxylic acid. The next steps of the pathways are conjectural, but a favorite possible route has been proposed, beginning with decarboxylation and concomitant dehydration by the decarboxylase oryM, followed by tautomerization, which may lead to the production of a diene intermediate. Reduction of this diene intermediate could give the known metabolite piliformic acid. On the pathway to oryzine B and oryzine A, however, hydroxylation of the diene by the alpha-ketoglutarate-dependent dioxygenase oryG and lactonisation by the lactonohydrolases oryH or oryL could give oryzine B directly. Finally, enoyl reduction by the dehydrogenase oryD would then convert oryzine B into oryzine A. The polypeptide is Lactonohydrolase oryH (Aspergillus oryzae (strain ATCC 42149 / RIB 40) (Yellow koji mold)).